The sequence spans 160 residues: Calcium and integrin-binding family member 3 (160 aa).

EF-hand domains follow at residues 39 to 74 (KDNPFRQRIAQVFSQDGDGHMTLENFLDMFSVMSEM), 76 to 111 (PRDLKAYYAFKIYDFNNDNYICAWDLEQTVTRLTRG), and 117 to 152 (EVTLVCEKVLDEADGDQDGRLSLEDFQNMILRAPDF). The Ca(2+) site is built by D89, N91, D93, Y95, D100, D130, D132, D134, R136, and D141.

Monomer and homodimer. Interacts with ITGA2B (via C-terminus cytoplasmic tail region); the interaction is stabilized/increased in a calcium and magnesium-dependent manner. Interacts with TMC1. Expressed in heart, liver and inner ear. In the inner ear, expressed in vestibule and basilar membrane cells. Expressed in megakaryocytes and endothelial cells.

In terms of biological role, acts as an auxiliary subunit of the sensory mechanoelectrical transduction (MET) channel in hair cells. Plays a role in regulating hair cell MET channel localization and function. The chain is Calcium and integrin-binding family member 3 (Cib3) from Mus musculus (Mouse).